Reading from the N-terminus, the 654-residue chain is DNA ligase (654 aa).

NAD(+)-binding positions include 34 to 38 (DLEYD), 83 to 84 (SL), and Glu-114. The active-site N6-AMP-lysine intermediate is Lys-116. Arg-137, Glu-171, Lys-280, and Lys-304 together coordinate NAD(+). Cys-396, Cys-399, Cys-414, and Cys-419 together coordinate Zn(2+). The 78-residue stretch at 577–654 (VISTILSGYT…EEQFYDLIKQ (78 aa)) folds into the BRCT domain.

The protein belongs to the NAD-dependent DNA ligase family. LigA subfamily. It depends on Mg(2+) as a cofactor. The cofactor is Mn(2+).

It catalyses the reaction NAD(+) + (deoxyribonucleotide)n-3'-hydroxyl + 5'-phospho-(deoxyribonucleotide)m = (deoxyribonucleotide)n+m + AMP + beta-nicotinamide D-nucleotide.. Its function is as follows. DNA ligase that catalyzes the formation of phosphodiester linkages between 5'-phosphoryl and 3'-hydroxyl groups in double-stranded DNA using NAD as a coenzyme and as the energy source for the reaction. It is essential for DNA replication and repair of damaged DNA. The chain is DNA ligase from Mycoplasmopsis agalactiae (strain NCTC 10123 / CIP 59.7 / PG2) (Mycoplasma agalactiae).